Consider the following 506-residue polypeptide: Maturase K (506 aa).

This sequence belongs to the intron maturase 2 family. MatK subfamily.

The protein localises to the plastid. Its subcellular location is the chloroplast. Functionally, usually encoded in the trnK tRNA gene intron. Probably assists in splicing its own and other chloroplast group II introns. The protein is Maturase K of Arctostaphylos uva-ursi (Bearberry).